The chain runs to 317 residues: D-aminoacyl-tRNA deacylase (317 aa).

This sequence belongs to the DtdA deacylase family. Requires Zn(2+) as cofactor. As to expression, ubiquitous.

Its subcellular location is the nucleus. It localises to the cytoplasm. It catalyses the reaction a D-aminoacyl-tRNA + H2O = a tRNA + a D-alpha-amino acid + H(+). It carries out the reaction glycyl-tRNA(Ala) + H2O = tRNA(Ala) + glycine + H(+). Its function is as follows. Hydrolyzes D-aminoacyl-tRNA into D-amino acid and free tRNA. Broad specificity toward the amino acid, but strict specificity toward the D-isomer. Seems to be required for ethanol tolerance. The polypeptide is D-aminoacyl-tRNA deacylase (GEK1) (Arabidopsis thaliana (Mouse-ear cress)).